Consider the following 594-residue polypeptide: MVGVPGAAAFQLGCEKRVPAMPGSPVEVKIQSRSSPPIMPPLPPINPGGPRPVSFTPTALSNGINHSPPTLNGAPSPPQRFSNGPASSTSSALTNQQLPATCGARQLSKLKRFLTTLQQFGNDISPEIGEKVRTLVLALVNSTVTIEEFHCKLQEATNFPLRPFVIPFLKANLPLLQRELLHCARAAKQTPSQYLAQHEHLLLNTSIASPADSSELLMEVHGNGKRPSPERRDENNFERDTVPPEPPAKRVCTISPAPRHSPALTVPLMNPGGQFHPTPPPLQHYTLEDIATSHLYREPNKMLEHREVRERHHNLSLNGGYQDELVDHRLTEREWADEWKHLDHALNCIMEMVEKTRRSMAVLRRCQESDREELNYWKRRFNENTELRKTGTELVSRQHSPGSTDSLSNDSQREFTSRPATGYVPVEFWKKTEEAVNKVKIQAMSEVQKAVAEAEQKAFEVIATERARMEQTIADVKRQAAEDAFLVINEQEESTENCWNCGRKASETCSGCNIARYCGSFCQHKDWERHHRLCGQSLHGHSPHSQSRPLLPGGRGSARSADCSVPSPALDKTSATTSRSSTPASVTAIDANGL.

Ser24 bears the Phosphoserine mark. Lys29 is covalently cross-linked (Glycyl lysine isopeptide (Lys-Gly) (interchain with G-Cter in SUMO2)). Residues 48–96 (GGPRPVSFTPTALSNGINHSPPTLNGAPSPPQRFSNGPASSTSSALTNQ) are disordered. Composition is skewed to polar residues over residues 55–70 (FTPTALSNGINHSPPT) and 79–96 (QRFSNGPASSTSSALTNQ). Positions 98–206 (LPATCGARQL…QHEHLLLNTS (109 aa)) are interaction with PRDM14. One can recognise a TAFH domain in the interval 104-199 (ARQLSKLKRF…TPSQYLAQHE (96 aa)). Residues 220 to 257 (VHGNGKRPSPERRDENNFERDTVPPEPPAKRVCTISPA) form a disordered region. Positions 227-242 (PSPERRDENNFERDTV) are enriched in basic and acidic residues. Ser255 bears the Phosphoserine mark. Residues 322-368 (QDELVDHRLTEREWADEWKHLDHALNCIMEMVEKTRRSMAVLRRCQE) are nervy homology region 2 (NHR2). The disordered stretch occupies residues 388-416 (RKTGTELVSRQHSPGSTDSLSNDSQREFT). A compositionally biased stretch (polar residues) spans 393-410 (ELVSRQHSPGSTDSLSND). At Ser400 the chain carries Phosphoserine. The tract at residues 426–475 (VEFWKKTEEAVNKVKIQAMSEVQKAVAEAEQKAFEVIATERARMEQTIAD) is nervy homology region 3 (NHR3). Lys440 is covalently cross-linked (Glycyl lysine isopeptide (Lys-Gly) (interchain with G-Cter in SUMO2)). A coiled-coil region spans residues 442–482 (QAMSEVQKAVAEAEQKAFEVIATERARMEQTIADVKRQAAE). Residues Cys498, Cys501, Cys509, Cys512, Cys518, Cys522, His530, and Cys534 each contribute to the Zn(2+) site. An MYND-type zinc finger spans residues 498-534 (CWNCGRKASETCSGCNIARYCGSFCQHKDWERHHRLC). Residues 538-594 (LHGHSPHSQSRPLLPGGRGSARSADCSVPSPALDKTSATTSRSSTPASVTAIDANGL) form a disordered region. Ser567 carries the post-translational modification Phosphoserine. Low complexity predominate over residues 573-588 (TSATTSRSSTPASVTA).

It belongs to the CBFA2T family. Homooligomer. Homotetramerization is mediated by the NHR2 domain. Interacts with CBFA2T3/MTG16. Can interact with RUNX1T1/CBFA2T1. Heterotetramerization between members of the CBFA2T family is proposed. Interacts with RBP, GFI1, TCF4, PRDM14. Interacts with TAL1 and CBFA2T3/MTG16; the heteromer with CBFA2T3/MTG16 may function in repression of TAL1. As to expression, expressed in embryonic stem cells.

It localises to the nucleus. Transcriptional corepressor which facilitates transcriptional repression via its association with DNA-binding transcription factors and recruitment of other corepressors and histone-modifying enzymes. Via association with PRDM14 is involved in regulation of embryonic stem cell (ESC) pluripotency. Involved in primordial germ cell (PCG) formation. Stabilizes PRDM14 and OCT4 on chromatin in a homooligomerization-dependent mannerCan repress the expression of MMP7 in a ZBTB33-dependent manner. Through heteromerization with CBFA2T3/MTG16 may be involved in regulation of the proliferation and the differentiation of erythroid progenitors by repressing the expression of TAL1 target genes. Required for the maintenance of the secretory cell lineage in the small intestine. Can inhibit Notch signaling probably by association with RBPJ and may be involved in GFI1-mediated Paneth cell differentiation. The chain is Protein CBFA2T2 (Cbfa2t2) from Mus musculus (Mouse).